An 886-amino-acid chain; its full sequence is Leucine-rich repeat-containing protein sog2 (886 aa).

LRR repeat units follow at residues 28–49, 53–74, 76–97, 99–120, 122–143, and 145–166; these read NALTLDLSHLNLRELPYEQLER, RIARLALGHNFIKSIGPEILKF, RLRYLNIRSNVLREFPESLCRL, SLEILDISRNKIKQLPESFGAL, NLKVLSISKNRLFELPTYIAHM, and NLEILKIENNHIVFPPPHIANN. Disordered stretches follow at residues 236-288, 301-364, 394-431, and 455-483; these read SPGM…THPP, SPRQ…ASPI, PTQLSASAKTSAISLPEVAKKERNRSNSTNDDYSSTRL, and RIFAQDPHPSPRLKKEETHENGSNLTNDS. Over residues 243-277 the composition is skewed to polar residues; the sequence is VTPSPHSHSPAGHQQSTPKSTLSKTNENSEGTLYD. The residue at position 301 (serine 301) is a Phosphoserine. 3 stretches are compositionally biased toward polar residues: residues 312–347, 394–406, and 419–431; these read SLATGLNSPSVSKPPSSATGPLYHSPQSSLTNSSVA, PTQLSASAKTSAI, and SNSTNDDYSSTRL. Serine 464 bears the Phosphoserine mark.

The protein resides in the cytoplasm. The protein localises to the nucleus. In Schizosaccharomyces pombe (strain 972 / ATCC 24843) (Fission yeast), this protein is Leucine-rich repeat-containing protein sog2.